Reading from the N-terminus, the 106-residue chain is Ferredoxin (106 aa).

Cysteine 9 and cysteine 17 together coordinate [3Fe-4S] cluster. [4Fe-4S] cluster contacts are provided by cysteine 21, cysteine 40, cysteine 43, and cysteine 46. The 4Fe-4S ferredoxin-type domain occupies 31-60 (RMLYIHPDECVDCGACEPVCPVEAIYYEDD). Residue cysteine 50 participates in [3Fe-4S] cluster binding. The disordered stretch occupies residues 84–106 (GAAKVGKVDRDVEPVSSLPPQGE).

Requires [4Fe-4S] cluster as cofactor. The cofactor is [3Fe-4S] cluster.

Its function is as follows. Ferredoxins are iron-sulfur proteins that transfer electrons in a wide variety of metabolic reactions. This Saccharopolyspora erythraea (Streptomyces erythraeus) protein is Ferredoxin (fdxA).